A 257-amino-acid chain; its full sequence is Pimeloyl-[acyl-carrier protein] methyl ester esterase (257 aa).

Residues 16 to 240 (LVLIHGWGMN…EQASHAPFIS (225 aa)) form the AB hydrolase-1 domain. Substrate-binding positions include Trp-22, 82–83 (SL), and 143–147 (FMALQ). The active-site Nucleophile is the Ser-82. Active-site residues include Asp-207 and His-235. Substrate is bound at residue His-235.

This sequence belongs to the AB hydrolase superfamily. Carboxylesterase BioH family. As to quaternary structure, monomer.

Its subcellular location is the cytoplasm. It catalyses the reaction 6-carboxyhexanoyl-[ACP] methyl ester + H2O = 6-carboxyhexanoyl-[ACP] + methanol + H(+). Its pathway is cofactor biosynthesis; biotin biosynthesis. The physiological role of BioH is to remove the methyl group introduced by BioC when the pimeloyl moiety is complete. It allows to synthesize pimeloyl-ACP via the fatty acid synthetic pathway through the hydrolysis of the ester bonds of pimeloyl-ACP esters. This is Pimeloyl-[acyl-carrier protein] methyl ester esterase from Aliivibrio fischeri (strain MJ11) (Vibrio fischeri).